The sequence spans 264 residues: Thiazole synthase (264 aa).

Lys-106 (schiff-base intermediate with DXP) is an active-site residue. 1-deoxy-D-xylulose 5-phosphate is bound by residues Gly-167, 193–194 (AG), and 215–216 (NS).

Belongs to the ThiG family. Homotetramer. Forms heterodimers with either ThiH or ThiS.

The protein localises to the cytoplasm. The catalysed reaction is [ThiS sulfur-carrier protein]-C-terminal-Gly-aminoethanethioate + 2-iminoacetate + 1-deoxy-D-xylulose 5-phosphate = [ThiS sulfur-carrier protein]-C-terminal Gly-Gly + 2-[(2R,5Z)-2-carboxy-4-methylthiazol-5(2H)-ylidene]ethyl phosphate + 2 H2O + H(+). The protein operates within cofactor biosynthesis; thiamine diphosphate biosynthesis. In terms of biological role, catalyzes the rearrangement of 1-deoxy-D-xylulose 5-phosphate (DXP) to produce the thiazole phosphate moiety of thiamine. Sulfur is provided by the thiocarboxylate moiety of the carrier protein ThiS. In vitro, sulfur can be provided by H(2)S. The sequence is that of Thiazole synthase from Stutzerimonas stutzeri (strain A1501) (Pseudomonas stutzeri).